Here is a 131-residue protein sequence, read N- to C-terminus: uncharacterized protein (131 aa).

This is an uncharacterized protein from Aquifex aeolicus (strain VF5).